The chain runs to 443 residues: MGKLFGTDGVRGVANRDLTPELAYKLGRAAAYVLKKKYNGQGIVVGKDTRISGDMLETALAAGILSVGLNVLRVGVMPTPAIAYLTRELKATAGAVISASHNPMEDNGIKFFSGSGFKLPDEVEEEIEKYVLGEKEIPIRPIGAEIGRVREISDAVLLYKSFAKNTVELPFSGLRVVVDCANGAASYVAPKIYEELGAEVIPIFNTPDGTNINANCGSTHPEALMRAVVEEGAHLGLAHDGDADRVLAVDEKGNLVDGDQIMVIIGKYLKKKGLLKNNRIVVTVMSNLGLKKAFAREGIEVLETKVGDRYVLEEMLKNGAIIGGEQSGHIILLDHNTTGDGIITALQLMQVIVAEGKKLSELAQEMPKFPQVLKNVRVLDKEKIMASEELAKAIARGEKKLGEGRILVRPSGTEPLIRVMAEGADAKLTEEVVDEIIAVIEKL.

The Phosphoserine intermediate role is filled by Ser100. 4 residues coordinate Mg(2+): Ser100, Asp240, Asp242, and Asp244. Ser100 is modified (phosphoserine).

Belongs to the phosphohexose mutase family. It depends on Mg(2+) as a cofactor. Post-translationally, activated by phosphorylation.

It catalyses the reaction alpha-D-glucosamine 1-phosphate = D-glucosamine 6-phosphate. Catalyzes the conversion of glucosamine-6-phosphate to glucosamine-1-phosphate. In Carboxydothermus hydrogenoformans (strain ATCC BAA-161 / DSM 6008 / Z-2901), this protein is Phosphoglucosamine mutase.